The following is a 398-amino-acid chain: MAAVQCLTFLFLFLLQNATSASPLPLFRRPIQSNHSNFVKHPRRSQVVFPVNHSSCDLFAGEWVRDETYPLYRSKECGRGIIDPGFDCQTYGRPDSDYLKFRWKPFNCNVPRFNGVKFLQEMRDKTIMFVGDSLGRNQWESLICMISSSAPSINTHIIHEDPLSTFKILDYNVKVSFYRAPYLVDIDKINGKTTLKLDEISVDASNAWRTADVLLFNTGHWWSHTGSLRGWEQMETGGRYYGDMDRLVALRKGLGTWSSWVLRYINSPLTRVFFLSVSPTHYNPNEWTSRSKTSTITQGGKSCYGQTTPFSGTTYPTSSYVNQKKVIDDVVKEMKSHVSLMDITMLSALRVDGHPSIYSGDLNPSLKRNPDRSSDCSHWCLPGLPDTWNQLFYAALLY.

Residues 1 to 21 (MAAVQCLTFLFLFLLQNATSA) form a helical; Signal-anchor for type II membrane protein membrane-spanning segment. A GDS motif motif is present at residues 131 to 133 (GDS). The short motif at 375-389 (DCSHWCLPGLPDTWN) is the DCXHWCLPGXXDXWN motif element.

It belongs to the PC-esterase family. TBL subfamily.

The protein localises to the membrane. In terms of biological role, may act as a bridging protein that binds pectin and other cell wall polysaccharides. Probably involved in maintaining esterification of pectins. May be involved in the specific O-acetylation of cell wall polymers. This Arabidopsis thaliana (Mouse-ear cress) protein is Protein trichome birefringence-like 45 (TBL45).